Consider the following 120-residue polypeptide: SAGA-associated factor 11 (120 aa).

Positions 40-60 (SLLNSSNSNTNSNTNGTIASN) are enriched in low complexity. Residues 40 to 82 (SLLNSSNSNTNSNTNGTIASNGGNGTTSDENNEIENSTIQDKS) are disordered. The SGF11-type zinc-finger motif lies at 93 to 114 (FRCLNCGRNIAGGRFASHISKC).

This sequence belongs to the SGF11 family. As to quaternary structure, component of the 1.8 MDa SAGA transcription coactivator-HAT complex. SAGA is built of 5 distinct domains with specialized functions. Within the SAGA complex, SUS1, SGF11, SGF73 and UBP8 form an additional subcomplex of SAGA called the DUB module (deubiquitination module). Interacts directly with SGF73, SUS1 and UBP8.

The protein localises to the nucleus. Its function is as follows. Functions as a component of the transcription regulatory histone acetylation (HAT) complex SAGA. At the promoters, SAGA is required for recruitment of the basal transcription machinery. It influences RNA polymerase II transcriptional activity through different activities such as TBP interaction and promoter selectivity, interaction with transcription activators, and chromatin modification through histone acetylation and deubiquitination. SAGA acetylates nucleosomal histone H3 to some extent (to form H3K9ac, H3K14ac, H3K18ac and H3K23ac). SAGA interacts with DNA via upstream activating sequences (UASs). Involved in transcriptional regulation of a subset of SAGA-regulated genes. Within the SAGA complex, participates in a subcomplex, that specifically deubiquitinates histones H2B. The sequence is that of SAGA-associated factor 11 from Candida albicans (strain SC5314 / ATCC MYA-2876) (Yeast).